The primary structure comprises 277 residues: Protein CMSS1 (277 aa).

Over residues 1-14 the composition is skewed to acidic residues; that stretch reads MADDLGNEWWEEPA. A disordered region spans residues 1-91; the sequence is MADDLGNEWW…QHAPTAGTPE (91 aa). A compositionally biased stretch (basic and acidic residues) spans 24-34; sequence EEVKESEESKG. The segment covering 35 to 52 has biased composition (basic residues); that stretch reads NKKKKIPSGKTQVKRKKE. A compositionally biased stretch (basic and acidic residues) spans 53–66; it reads VKVSQEAEKEDSAP.

Belongs to the CMS1 family.

The protein is Protein CMSS1 (cmss1) of Xenopus laevis (African clawed frog).